The sequence spans 643 residues: Threonine--tRNA ligase 1 (643 aa).

The TGS domain maps to 3 to 64; sequence DMVKITFPDG…NEDGTVEIIT (62 aa). Residues 245–542 form a catalytic region; sequence DHRKLGKELK…LIEEHKGALP (298 aa). The Zn(2+) site is built by C338, H389, and H519.

Belongs to the class-II aminoacyl-tRNA synthetase family. Homodimer. It depends on Zn(2+) as a cofactor.

It localises to the cytoplasm. The catalysed reaction is tRNA(Thr) + L-threonine + ATP = L-threonyl-tRNA(Thr) + AMP + diphosphate + H(+). In terms of biological role, catalyzes the attachment of threonine to tRNA(Thr) in a two-step reaction: L-threonine is first activated by ATP to form Thr-AMP and then transferred to the acceptor end of tRNA(Thr). Also edits incorrectly charged L-seryl-tRNA(Thr). The protein is Threonine--tRNA ligase 1 (thrS) of Bacillus subtilis (strain 168).